The chain runs to 529 residues: Mitochondrial inner membrane magnesium transporter MIT1 (529 aa).

2 coiled-coil regions span residues 336–388 (KIQL…LKNE) and 416–450 (LLETHLQLTDELSGELENMEEKITHYEELMRLNLD). The helical transmembrane segment at 456–476 (FILLNAKISFSTLFCSICAVI) threads the bilayer. Residues 477–492 (TSLFGMNLKNFIEHND) lie on the Mitochondrial intermembrane side of the membrane. Residues 493-513 (YAFFIVSIFITSWSIVGIYFT) traverse the membrane as a helical segment. The Mitochondrial matrix portion of the chain corresponds to 514–529 (KNINTLLRFFDKYNVK).

This sequence belongs to the CorA metal ion transporter (MIT) (TC 1.A.35) family.

Its subcellular location is the mitochondrion inner membrane. Functionally, mitochondrial inner membrane magnesium transporter required for mitochondrial magnesium homeostasis. Involved in the development of the sporozoite in the mosquito vector midgut. This Plasmodium falciparum (isolate 3D7) protein is Mitochondrial inner membrane magnesium transporter MIT1.